The following is a 504-amino-acid chain: Maturase K (504 aa).

This sequence belongs to the intron maturase 2 family. MatK subfamily.

It localises to the plastid. Its subcellular location is the chloroplast. Its function is as follows. Usually encoded in the trnK tRNA gene intron. Probably assists in splicing its own and other chloroplast group II introns. The protein is Maturase K of Fagus hayatae (Formosan elm).